The following is a 695-amino-acid chain: G-protein coupled receptor-associated protein LMBRD2 (695 aa).

Residues 1-5 are Extracellular-facing; sequence MSGAA. The helical transmembrane segment at 6–21 threads the bilayer; it reads LGLEIVFVFFLALFLL. The Cytoplasmic portion of the chain corresponds to 22-32; the sequence is HRYGDFKKQHR. Residues 33 to 53 traverse the membrane as a helical segment; it reads LVIIGTLLAWYLCFLIVFILP. Over 54 to 105 the chain is Extracellular; sequence LDVSTTIYNRCKHAAANSSPPENSNITGLYATANPVPSQHPCFKPWSYIPDG. N78 carries an N-linked (GlcNAc...) asparagine glycan. The chain crosses the membrane as a helical span at residues 106–126; it reads IMPIFWRVVYWTSQFLTWILL. Topologically, residues 127–150 are cytoplasmic; it reads PFMQSYARSGGFSITGKIKTALIE. The helical transmembrane segment at 151-171 threads the bilayer; the sequence is NAIYYGTYLLIFGAFLIYVAV. The Extracellular portion of the chain corresponds to 172-186; that stretch reads NPHLHLEWNQLQTIG. The chain crosses the membrane as a helical span at residues 187 to 207; that stretch reads IAAANTWGLFLLVLLLGYGLV. Over 208–387 the chain is Cytoplasmic; the sequence is EIPRSYWNGA…ECLLRPWFYK (180 aa). Residues 227–262 adopt a coiled-coil conformation; it reads YFKAAKLMTEKADAEENLEDAMEEVRKVNESIKYNH. Residues 388–408 traverse the membrane as a helical segment; that stretch reads ILAVVLSIFSVIVVWSECTFF. Topologically, residues 409-432 are extracellular; sequence STTPVLSLFAVFIQLAEKTYNYIY. Residues 433-453 traverse the membrane as a helical segment; it reads IEIACFLSIFFLSICVYSTVF. Residues 454-473 lie on the Cytoplasmic side of the membrane; sequence RIRVFNYYYLASHHQTDAYS. A helical membrane pass occupies residues 474 to 494; it reads LLFSGMLFCRLTPPLCLNFLG. Residues 495–521 lie on the Extracellular side of the membrane; the sequence is LTHMDSSISHKNTQPTAYTSIMGSMKV. Residues 522-542 form a helical membrane-spanning segment; the sequence is LSFIADGFYIYYPMLVVILCI. The Cytoplasmic segment spans residues 543–695; the sequence is ATYFSLGTRC…MSRSDIFNDV (153 aa). Residues 571 to 603 are a coiled coil; the sequence is LVNEGKELIRKEKRKRQRQEEGENRRREWKERY. The disordered stretch occupies residues 581–628; that stretch reads KEKRKRQRQEEGENRRREWKERYGHNREDSTRNRNIHTDPKESNFSDV. The segment covering 588-624 has biased composition (basic and acidic residues); the sequence is RQEEGENRRREWKERYGHNREDSTRNRNIHTDPKESN. A Phosphoserine modification is found at S633. The disordered stretch occupies residues 662–682; the sequence is AETFTDDPLESESGRYQPGGR.

It belongs to the LIMR family.

It is found in the cell membrane. In terms of biological role, recruited to ligand-activated beta-2 adrenergic receptor/ADRB2, it negatively regulates the adrenergic receptor signaling pathway. May also regulate other G-protein coupled receptors including type-1 angiotensin II receptor/AGTR1. The protein is G-protein coupled receptor-associated protein LMBRD2 of Homo sapiens (Human).